A 253-amino-acid polypeptide reads, in one-letter code: Phycobilisome rod-core linker polypeptide CpcG4 (253 aa).

Residues 11-191 form the PBS-linker domain; that stretch reads SSQNHRVTSF…DFQEKAGTVQ (181 aa).

It belongs to the phycobilisome linker protein family. Part of the phycobilisome, a hemidiscoidal structure that is composed of two distinct substructures: a core complex and a number of rods radiating from the core.

Its subcellular location is the cellular thylakoid membrane. Rod-core linker protein required for attachment of phycocyanin to allophycocyanin in cores of phycobilisomes. In terms of biological role, linker polypeptides determine the state of aggregation and the location of the disk-shaped phycobiliprotein units within the phycobilisome and modulate their spectroscopic properties in order to mediate a directed and optimal energy transfer. The protein is Phycobilisome rod-core linker polypeptide CpcG4 of Nostoc sp. (strain PCC 7120 / SAG 25.82 / UTEX 2576).